Here is a 485-residue protein sequence, read N- to C-terminus: Glutamate--tRNA ligase (485 aa).

A 'HIGH' region motif is present at residues 11–21 (PSPTGLLHIGN). A 'KMSKS' region motif is present at residues 255-259 (KLSKR). An ATP-binding site is contributed by K258.

It belongs to the class-I aminoacyl-tRNA synthetase family. Glutamate--tRNA ligase type 1 subfamily. In terms of assembly, monomer.

The protein localises to the cytoplasm. It catalyses the reaction tRNA(Glu) + L-glutamate + ATP = L-glutamyl-tRNA(Glu) + AMP + diphosphate. In terms of biological role, catalyzes the attachment of glutamate to tRNA(Glu) in a two-step reaction: glutamate is first activated by ATP to form Glu-AMP and then transferred to the acceptor end of tRNA(Glu). The sequence is that of Glutamate--tRNA ligase from Streptococcus sanguinis (strain SK36).